The chain runs to 251 residues: Carbohydrate deacetylase (251 aa).

Residues His59 and His122 each contribute to the Mg(2+) site.

This sequence belongs to the YdjC deacetylase family. As to quaternary structure, homodimer. Requires Mg(2+) as cofactor.

Its function is as follows. Probably catalyzes the deacetylation of acetylated carbohydrates an important step in the degradation of oligosaccharides. This Vibrio campbellii (strain ATCC BAA-1116) protein is Carbohydrate deacetylase.